The primary structure comprises 456 residues: Protein COBRA (456 aa).

Residues 1–36 (MESFFSRSTSIVSKLSFLALWIVFLISSSSFTSTEA) form the signal peptide. Residues N45, N170, N178, N217, N242, N258, N328, N343, and N362 are each glycosylated (N-linked (GlcNAc...) asparagine). Residue N431 is the site of GPI-anchor amidated asparagine attachment. A propeptide spans 432-456 (GGSRSQFSFVAAVLLPLLVFFFFSA) (removed in mature form).

The protein belongs to the COBRA family. In terms of tissue distribution, expressed in roots, stems, leaves, flowers and siliques. Up-regulated in the root zone of rapid longitudinal expansion.

Its subcellular location is the lateral cell membrane. In terms of biological role, involved in determining the orientation of cell expansion, probably by playing an important role in cellulose deposition. May act by recruiting cellulose synthesizing complexes to discrete positions on the cell surface. This is Protein COBRA (COB) from Arabidopsis thaliana (Mouse-ear cress).